We begin with the raw amino-acid sequence, 114 residues long: MSDPKPTRSQGDLAEMLEMLLDKGVVVNADIAVSVGDTELLGIELRAAIASFETAAEYGLEFPTGTDMERVESAANISPDQSDPASETQSETESTNPLSDDSTPTASTSAEETK.

The segment at 13-22 (LAEMLEMLLD) is alpha helix 1. 2 beta-strand regions span residues 25-35 (VVVNADIAVSV) and 40-50 (LLGIELRAAIA). Residues 46-50 (RAAIA) carry the Conserved in GvpM1/2 but not GvpA motif. Alpha helix regions lie at residues 52–72 (FETA…ERVE), 78–87 (SPDQSDPASE), and 95–105 (TNPLSDDSTPT). A disordered region spans residues 63–114 (PTGTDMERVESAANISPDQSDPASETQSETESTNPLSDDSTPTASTSAEETK). The span at 75–98 (ANISPDQSDPASETQSETESTNPL) shows a compositional bias: polar residues. Residues 99-114 (SDDSTPTASTSAEETK) are compositionally biased toward low complexity.

Belongs to the gas vesicle GvpA family. GvpF to GvpM interact with each other in vitro, and may form multi-subunit complex(es). Interacts with GvpA1.

It is found in the gas vesicle. Proteins GvpF to GvpM might be involved in nucleating gas vesicle formation. Mutagenesis of residues 13-61 shows that almost none of them can be substituted and still make gas vesicles. A minor component of the gas vesicle. Gas vesicles are hollow, gas filled proteinaceous nanostructures found in several microbial planktonic microorganisms. They allow positioning of halobacteria at the optimal depth for growth in the poorly aerated, shallow brine pools of their habitat. Its function is as follows. Expression of a 9.5 kb p-vac DNA fragment containing 2 divergently transcribed regions (gvpD-gvpE-gvpF-gvpG-gvpH-gvpI-gvpJ-gvpK-gvpL-gvpM and gvpA-gvpC-gvpN-gvpO) allows H.volcanii to produce gas vesicles. All site-directed mutagenesis is tested in H.volcanii. A minimal gas vesicle can be made in H.volcanii by gvpA1-gvpO1 plus gvpF1-gvpG1-gvpJ1-gvpK1-gvpL1-gvpM1; lack of enough GvpJ1 prevents formation. A similar region restores gas vesicle production in H.halobium without the p-vac locus, but it still has the c-vac locus. The sequence is that of Gas vesicle protein J1 (gvpJ11) from Halobacterium salinarum (strain ATCC 700922 / JCM 11081 / NRC-1) (Halobacterium halobium).